A 319-amino-acid chain; its full sequence is Beta-ketoacyl-[acyl-carrier-protein] synthase III (319 aa).

Residues C110 and H246 contribute to the active site. An ACP-binding region spans residues 247–251 (QANYR). N276 is a catalytic residue.

Belongs to the thiolase-like superfamily. FabH family. In terms of assembly, homodimer.

It is found in the cytoplasm. The enzyme catalyses malonyl-[ACP] + acetyl-CoA + H(+) = 3-oxobutanoyl-[ACP] + CO2 + CoA. The protein operates within lipid metabolism; fatty acid biosynthesis. Its function is as follows. Catalyzes the condensation reaction of fatty acid synthesis by the addition to an acyl acceptor of two carbons from malonyl-ACP. Catalyzes the first condensation reaction which initiates fatty acid synthesis and may therefore play a role in governing the total rate of fatty acid production. Possesses both acetoacetyl-ACP synthase and acetyl transacylase activities. Its substrate specificity determines the biosynthesis of branched-chain and/or straight-chain of fatty acids. The sequence is that of Beta-ketoacyl-[acyl-carrier-protein] synthase III from Lactobacillus delbrueckii subsp. bulgaricus (strain ATCC 11842 / DSM 20081 / BCRC 10696 / JCM 1002 / NBRC 13953 / NCIMB 11778 / NCTC 12712 / WDCM 00102 / Lb 14).